We begin with the raw amino-acid sequence, 258 residues long: Ribosomal protein L11 methyltransferase (258 aa).

Threonine 117, glycine 138, aspartate 160, and asparagine 201 together coordinate S-adenosyl-L-methionine.

This sequence belongs to the methyltransferase superfamily. PrmA family.

The protein resides in the cytoplasm. It catalyses the reaction L-lysyl-[protein] + 3 S-adenosyl-L-methionine = N(6),N(6),N(6)-trimethyl-L-lysyl-[protein] + 3 S-adenosyl-L-homocysteine + 3 H(+). In terms of biological role, methylates ribosomal protein L11. This chain is Ribosomal protein L11 methyltransferase, found in Thermosipho melanesiensis (strain DSM 12029 / CIP 104789 / BI429).